Reading from the N-terminus, the 68-residue chain is Glucagon-1 (68 aa).

Belongs to the glucagon family.

Its subcellular location is the secreted. In terms of biological role, promotes hydrolysis of glycogen and lipids, and raises the blood sugar level. This is Glucagon-1 (gcg) from Oncorhynchus kisutch (Coho salmon).